The following is a 35-amino-acid chain: Peptide Hact-3 (35 aa).

In terms of tissue distribution, expressed in tentacles.

The protein resides in the nematocyst. It localises to the secreted. In terms of biological role, peptide with unknown function. Does not exhibit antimicrobial activity against Escherichia coli and Staphylococcus aureus. This Heliofungia actiniformis (Mushroom coral) protein is Peptide Hact-3.